The primary structure comprises 276 residues: MQTSSFPIVIDDHLLPDKAHALAQQLNLPLISATEAEKSAPLMKLGWWQDGKKSGDHTNEIDYKLALFPPSTGPVCIDFVSGKKNHRRQFGGGKGQPLARAVLAAEHPTIIDATAGMGGDAFVFASLGCQVTMIERSPIIAALLSDALNRAQQTGVAEDIQEIVKRLRLINDDATQYLTTQAPICDVIYLDPMYPEKKKTAATKKEMQALQHLVGPDIDSETLLAAALHVAQKRVVVKRPKNAPALTGIQPNASIQSPNTRYDIYAIKALKAAGKL.

S-adenosyl-L-methionine-binding positions include 135–136 (ER) and D191.

Belongs to the methyltransferase superfamily. RsmJ family.

The protein localises to the cytoplasm. It carries out the reaction guanosine(1516) in 16S rRNA + S-adenosyl-L-methionine = N(2)-methylguanosine(1516) in 16S rRNA + S-adenosyl-L-homocysteine + H(+). Its function is as follows. Specifically methylates the guanosine in position 1516 of 16S rRNA. The chain is Ribosomal RNA small subunit methyltransferase J from Hydrogenovibrio crunogenus (strain DSM 25203 / XCL-2) (Thiomicrospira crunogena).